The sequence spans 629 residues: tRNA uridine 5-carboxymethylaminomethyl modification enzyme MnmG (629 aa).

Position 11-16 (11-16 (GGGHAG)) interacts with FAD. Position 273–287 (273–287 (GPRYCPSFEDKAVRF)) interacts with NAD(+).

It belongs to the MnmG family. Homodimer. Heterotetramer of two MnmE and two MnmG subunits. FAD is required as a cofactor.

It is found in the cytoplasm. Its function is as follows. NAD-binding protein involved in the addition of a carboxymethylaminomethyl (cmnm) group at the wobble position (U34) of certain tRNAs, forming tRNA-cmnm(5)s(2)U34. This chain is tRNA uridine 5-carboxymethylaminomethyl modification enzyme MnmG, found in Mycoplasma mycoides subsp. mycoides SC (strain CCUG 32753 / NCTC 10114 / PG1).